A 166-amino-acid chain; its full sequence is MYKSVINIVLFCPEIPNNTGNIVRSCTAFKANLHLIKPYGFFLNDKRMVRAGLNCWDKIQLFEHKSWEHFLQATTENKTIWLLTKSGDKTPDQICMTNKLPNELYFVFGQETKGLPKTIMDNFKQNQIRIPIWNSVRSINLANAVVCILYEYSKQNQYSNLDKQCA.

Residues Leu83, Gly109, Ile130, and Ser138 each coordinate S-adenosyl-L-methionine.

It belongs to the class IV-like SAM-binding methyltransferase superfamily. RNA methyltransferase TrmH family. TrmL subfamily.

The protein localises to the cytoplasm. It catalyses the reaction cytidine(34) in tRNA + S-adenosyl-L-methionine = 2'-O-methylcytidine(34) in tRNA + S-adenosyl-L-homocysteine + H(+). The enzyme catalyses 5-carboxymethylaminomethyluridine(34) in tRNA(Leu) + S-adenosyl-L-methionine = 5-carboxymethylaminomethyl-2'-O-methyluridine(34) in tRNA(Leu) + S-adenosyl-L-homocysteine + H(+). In terms of biological role, could methylate the ribose at the nucleotide 34 wobble position in tRNA. The polypeptide is Putative tRNA (cytidine(34)-2'-O)-methyltransferase (Mycoplasma genitalium (strain ATCC 33530 / DSM 19775 / NCTC 10195 / G37) (Mycoplasmoides genitalium)).